The following is a 186-amino-acid chain: MMNQYNVTYLSKILCLKTEILYKPFSIINRSIVNQYNIDVKYDDITSIVKIRHKTENTILVFQIFNESNVKYSPIEYDYGDPIIITSNLQHGHNRIPINMLYIDVVESDMFPTFSRLDSETIKIITSILQSDNKKEQSIKLPKVSENELSVKILYHKDYPLKYVRYYKNNMVTGIEVIDRSVAITS.

It belongs to the poxviridae DNA-directed RNA polymerase 22 kDa subunit family. The DNA-dependent RNA polymerase used for intermediate and late genes expression consists of eight subunits Rpo30/OPG66, Rpo7/OPG90, Rpo22/OPG103, Rpo147/OPG105, Rpo18/OPG119, Rpo19/OPG131, Rpo132/OPG151 and Rpo35/OPG156. The same holoenzyme, with the addition of the transcription-specificity factor OPG109, is used for early gene expression.

The protein localises to the virion. The enzyme catalyses RNA(n) + a ribonucleoside 5'-triphosphate = RNA(n+1) + diphosphate. In terms of biological role, part of the DNA-dependent RNA polymerase which catalyzes the transcription of viral DNA into RNA using the four ribonucleoside triphosphates as substrates. Responsible for the transcription of early, intermediate and late genes. DNA-dependent RNA polymerase associates with the early transcription factor (ETF), itself composed of OPG118 and OPG133, thereby allowing the early genes transcription. Late transcription, and probably also intermediate transcription, require newly synthesized RNA polymerase. The sequence is that of DNA-directed RNA polymerase 22 kDa subunit (OPG103) from Vertebrata (FPV).